The following is a 260-amino-acid chain: Vesicle-associated membrane protein/synaptobrevin-binding protein (260 aa).

At 1–238 the chain is on the cytoplasmic side; that stretch reads MASHEQALIL…SPAPAAAVRA (238 aa). In terms of domain architecture, MSP spans 7–125; that stretch reads ALILEPAGEL…MDTKLRCVFE (119 aa). A disordered region spans residues 127-177; the sequence is PDGSHQAPASDASRATDAGAHFSESALEDPTVASRKTETQSPKRVGAVGSA. Positions 172-216 form a coiled coil; the sequence is GAVGSAGEDVKKLQHELKKAQSEITSLKGENSQLKDEGIRLRKVA. Residues 239 to 259 traverse the membrane as a helical; Anchor for type IV membrane protein segment; sequence FPPVVYVVAAIILGLIIGKFL.

The protein belongs to the VAMP-associated protein (VAP) (TC 9.B.17) family. In terms of tissue distribution, detected only in the central nervous system and the gill of aplysia.

The protein localises to the membrane. The protein resides in the synapse. Its subcellular location is the synaptosome. Required for neurotransmitter release. Interacts with VAMP. This Aplysia californica (California sea hare) protein is Vesicle-associated membrane protein/synaptobrevin-binding protein.